The sequence spans 276 residues: Diaminopimelate epimerase (276 aa).

Substrate is bound by residues Asn13, Gln46, and Asn66. Cys75 serves as the catalytic Proton donor. Residues 76 to 77 (GN), Asn159, Asn192, and 210 to 211 (ER) contribute to the substrate site. The Proton acceptor role is filled by Cys219. 220-221 (GS) is a binding site for substrate.

It belongs to the diaminopimelate epimerase family. As to quaternary structure, homodimer.

Its subcellular location is the cytoplasm. It catalyses the reaction (2S,6S)-2,6-diaminopimelate = meso-2,6-diaminopimelate. It participates in amino-acid biosynthesis; L-lysine biosynthesis via DAP pathway; DL-2,6-diaminopimelate from LL-2,6-diaminopimelate: step 1/1. In terms of biological role, catalyzes the stereoinversion of LL-2,6-diaminopimelate (L,L-DAP) to meso-diaminopimelate (meso-DAP), a precursor of L-lysine and an essential component of the bacterial peptidoglycan. The sequence is that of Diaminopimelate epimerase from Pseudoalteromonas atlantica (strain T6c / ATCC BAA-1087).